A 265-amino-acid chain; its full sequence is Upstream stimulatory factor (265 aa).

Residues 1–18 (MDVQDHTLDQGPQDKDKD) are compositionally biased toward basic and acidic residues. 2 disordered regions span residues 1–21 (MDVQ…DLEE) and 119–149 (ASAA…AAGG). Positions 134-144 (GEQQPGITQPS) are enriched in polar residues. A bHLH domain is found at 190–245 (RRRATHNEVERRRRDKINNWIVKLSKIIPDCNIDHSKQGQSKGGILTKTCDYIHDL).

Efficient DNA binding requires dimerization with another bHLH protein. Binds DNA as a homodimer or a heterodimer. In terms of tissue distribution, enriched in ectodermal tissue.

The protein localises to the nucleus. Its function is as follows. May act as a transcription factor which recognizes the CACGTG motif on SPEC gene promoters. In Strongylocentrotus purpuratus (Purple sea urchin), this protein is Upstream stimulatory factor.